Here is a 389-residue protein sequence, read N- to C-terminus: Na(+)/H(+) antiporter NhaA (389 aa).

Helical transmembrane passes span I17–F37, L59–V79, S95–F115, A124–L144, V154–F174, S177–L197, L213–I233, F261–L281, I292–V312, I328–L348, and L363–V383.

The protein belongs to the NhaA Na(+)/H(+) (TC 2.A.33) antiporter family.

The protein localises to the cell inner membrane. It carries out the reaction Na(+)(in) + 2 H(+)(out) = Na(+)(out) + 2 H(+)(in). Na(+)/H(+) antiporter that extrudes sodium in exchange for external protons. In Shewanella oneidensis (strain ATCC 700550 / JCM 31522 / CIP 106686 / LMG 19005 / NCIMB 14063 / MR-1), this protein is Na(+)/H(+) antiporter NhaA.